The primary structure comprises 87 residues: ParB-like nuclease domain-containing protein YnaK (87 aa).

This Escherichia coli (strain K12) protein is ParB-like nuclease domain-containing protein YnaK (ynaK).